The sequence spans 362 residues: Protein RecA (362 aa).

Position 77–84 (77–84 (GPESSGKT)) interacts with ATP.

This sequence belongs to the RecA family.

It localises to the cytoplasm. Its function is as follows. Can catalyze the hydrolysis of ATP in the presence of single-stranded DNA, the ATP-dependent uptake of single-stranded DNA by duplex DNA, and the ATP-dependent hybridization of homologous single-stranded DNAs. It interacts with LexA causing its activation and leading to its autocatalytic cleavage. This is Protein RecA from Rhizobium etli (strain CIAT 652).